A 716-amino-acid polypeptide reads, in one-letter code: Fatty acid oxidation complex subunit alpha (716 aa).

The segment at 1–188 (MIYQSPTIQV…KVGAIDAVVA (188 aa)) is enoyl-CoA hydratase/isomerase. Residue D295 participates in substrate binding. Residues 310–716 (KDIKHAAVLG…SNNGSYYPKA (407 aa)) form a 3-hydroxyacyl-CoA dehydrogenase region. Residues M323, D342, 399 to 401 (VVE), K406, and S428 each bind NAD(+). H449 acts as the For 3-hydroxyacyl-CoA dehydrogenase activity in catalysis. Residue N452 participates in NAD(+) binding. Residues N499 and Y659 each contribute to the substrate site.

In the N-terminal section; belongs to the enoyl-CoA hydratase/isomerase family. The protein in the C-terminal section; belongs to the 3-hydroxyacyl-CoA dehydrogenase family. Heterotetramer of two alpha chains (FadB) and two beta chains (FadA).

It carries out the reaction a (3S)-3-hydroxyacyl-CoA + NAD(+) = a 3-oxoacyl-CoA + NADH + H(+). The enzyme catalyses a (3S)-3-hydroxyacyl-CoA = a (2E)-enoyl-CoA + H2O. The catalysed reaction is a 4-saturated-(3S)-3-hydroxyacyl-CoA = a (3E)-enoyl-CoA + H2O. It catalyses the reaction (3S)-3-hydroxybutanoyl-CoA = (3R)-3-hydroxybutanoyl-CoA. It carries out the reaction a (3Z)-enoyl-CoA = a 4-saturated (2E)-enoyl-CoA. The enzyme catalyses a (3E)-enoyl-CoA = a 4-saturated (2E)-enoyl-CoA. It functions in the pathway lipid metabolism; fatty acid beta-oxidation. Functionally, involved in the aerobic and anaerobic degradation of long-chain fatty acids via beta-oxidation cycle. Catalyzes the formation of 3-oxoacyl-CoA from enoyl-CoA via L-3-hydroxyacyl-CoA. It can also use D-3-hydroxyacyl-CoA and cis-3-enoyl-CoA as substrate. In Shewanella amazonensis (strain ATCC BAA-1098 / SB2B), this protein is Fatty acid oxidation complex subunit alpha.